The chain runs to 295 residues: Geranylfarnesyl diphosphate synthase (295 aa).

Residues K51, R54, and H83 each coordinate isopentenyl diphosphate. Residues D90 and D94 each coordinate Mg(2+). Position 99 (R99) interacts with an all-trans-polyprenyl diphosphate. Position 100 (R100) interacts with isopentenyl diphosphate. 3 residues coordinate an all-trans-polyprenyl diphosphate: K174, T175, and Q212.

The protein belongs to the FPP/GGPP synthase family. Homodimer. Mg(2+) serves as cofactor.

The catalysed reaction is isopentenyl diphosphate + (2E,6E,10E)-geranylgeranyl diphosphate = (2E,6E,10E,14E)-geranylfarnesyl diphosphate + diphosphate. In terms of biological role, involved in biosynthesis of the polyprenyl side-chain of methanophenazine, an electron carrier utilized for methanogenesis. Catalyzes the condensation of isopentenyl pyrophosphate with the allylic pyrophosphates to yield geranylfarnesyl diphosphate (GFPP). It prefers geranylgeranyl diphosphate (GGPP) and farnesyl diphosphate (FPP) as allylic substrate. The protein is Geranylfarnesyl diphosphate synthase of Methanosarcina mazei (strain ATCC BAA-159 / DSM 3647 / Goe1 / Go1 / JCM 11833 / OCM 88) (Methanosarcina frisia).